The following is a 317-amino-acid chain: Putative 2-hydroxyacid dehydrogenase SAOUHSC_02577 (317 aa).

NAD(+) is bound by residues 155-156, 234-236, and Asp260; these read EI and ASR. Arg236 is a catalytic residue. Glu265 is a catalytic residue. His283 functions as the Proton donor in the catalytic mechanism. An NAD(+)-binding site is contributed by 283–286; it reads HIGN.

Belongs to the D-isomer specific 2-hydroxyacid dehydrogenase family.

This Staphylococcus aureus (strain NCTC 8325 / PS 47) protein is Putative 2-hydroxyacid dehydrogenase SAOUHSC_02577.